Here is a 112-residue protein sequence, read N- to C-terminus: UPF0212 protein Mboo_1659 (112 aa).

This sequence belongs to the UPF0212 family.

The protein is UPF0212 protein Mboo_1659 of Methanoregula boonei (strain DSM 21154 / JCM 14090 / 6A8).